We begin with the raw amino-acid sequence, 252 residues long: tRNA (guanine-N(1)-)-methyltransferase (252 aa).

Residues glycine 113 and 133–138 (IGDYVL) contribute to the S-adenosyl-L-methionine site. Over residues 229-238 (VARPAANAPA) the composition is skewed to low complexity. Residues 229–252 (VARPAANAPAKGESQKTPKNKTDG) form a disordered region. The span at 241 to 252 (ESQKTPKNKTDG) shows a compositional bias: basic and acidic residues.

It belongs to the RNA methyltransferase TrmD family. As to quaternary structure, homodimer.

Its subcellular location is the cytoplasm. The enzyme catalyses guanosine(37) in tRNA + S-adenosyl-L-methionine = N(1)-methylguanosine(37) in tRNA + S-adenosyl-L-homocysteine + H(+). In terms of biological role, specifically methylates guanosine-37 in various tRNAs. The polypeptide is tRNA (guanine-N(1)-)-methyltransferase (Rhodopseudomonas palustris (strain HaA2)).